A 139-amino-acid polypeptide reads, in one-letter code: uncharacterized protein (139 aa).

This is an uncharacterized protein from Homo sapiens (Human).